The primary structure comprises 111 residues: Cell division protein FtsL (111 aa).

Residues 1–26 (MAQARTEFSKVAAPRKLEEMYAQRGD) are Cytoplasmic-facing. A helical transmembrane segment spans residues 27 to 47 (LFPYLLAVLVLLTLVSVFHVW). Topologically, residues 48 to 111 (SRVRVVDLNL…PTDQQVVVVK (64 aa)) are periplasmic. Positions 51–85 (RVVDLNLEVAEVARQLKVAQEEQNRLKLEVASLKT) form a coiled coil.

Belongs to the FtsL family.

It localises to the cell inner membrane. In terms of biological role, essential cell division protein. The protein is Cell division protein FtsL of Geobacter sulfurreducens (strain ATCC 51573 / DSM 12127 / PCA).